Reading from the N-terminus, the 789-residue chain is Protein translocase subunit SecA 2 (789 aa).

Residues glutamine 79, glycine 97–threonine 101, and aspartate 487 contribute to the ATP site.

This sequence belongs to the SecA family. As to quaternary structure, monomer and homodimer. Part of the essential Sec protein translocation apparatus which comprises SecA, SecYEG and auxiliary proteins SecDF. Other proteins may also be involved.

The protein resides in the cell membrane. It is found in the cytoplasm. It catalyses the reaction ATP + H2O + cellular proteinSide 1 = ADP + phosphate + cellular proteinSide 2.. Its function is as follows. Part of the Sec protein translocase complex. Interacts with the SecYEG preprotein conducting channel. Has a central role in coupling the hydrolysis of ATP to the transfer of proteins into and across the cell membrane, serving as an ATP-driven molecular motor driving the stepwise translocation of polypeptide chains across the membrane. The chain is Protein translocase subunit SecA 2 from Pediococcus pentosaceus (strain ATCC 25745 / CCUG 21536 / LMG 10740 / 183-1w).